Reading from the N-terminus, the 64-residue chain is Cytochrome c oxidase subunit 9, mitochondrial (64 aa).

Residues 1–15 (MAATAVRPITGMLRR) are Mitochondrial matrix-facing. The chain crosses the membrane as a helical span at residues 16-36 (GLILDIGIALGVGFVMANGYW). Residues 37–64 (YGYHMPRTNARDNYYKKLEEERAARMGA) are Mitochondrial intermembrane-facing.

It belongs to the fungal cytochrome c oxidase subunit 7a family. In terms of assembly, component of the cytochrome c oxidase (complex IV, CIV), a multisubunit enzyme composed of 11 subunits. The complex is composed of a catalytic core of 3 subunits Cox1, Cox2 and Cox3, encoded in the mitochondrial DNA, and 8 supernumerary subunits Cox4, Cox5a/Cox5, Cox6, Cox7, Cox8, Cox7a/Cox9, Cox6b/Cox12 and Cox6a/Cox13, which are encoded in the nuclear genome. The complex exists as a monomer or a dimer and forms respiratory supercomplexes (SCs) in the inner mitochondrial membrane with NADH-ubiquinone oxidoreductase (complex I, CI) and ubiquinol-cytochrome c oxidoreductase (cytochrome b-c1 complex, complex III, CIII), resulting in various different assemblies (supercomplexes I(1)IV(1), I(1)III(3)IV(2), III(2)IV(1) and III(2)IV(2) as well as larger supercomplexes of compositions like I(1)III(2)IV(5-6)).

The protein resides in the mitochondrion inner membrane. Its pathway is energy metabolism; oxidative phosphorylation. In terms of biological role, component of the cytochrome c oxidase, the last enzyme in the mitochondrial electron transport chain which drives oxidative phosphorylation. The respiratory chain contains 3 multisubunit complexes succinate dehydrogenase (complex II, CII), ubiquinol-cytochrome c oxidoreductase (cytochrome b-c1 complex, complex III, CIII) and cytochrome c oxidase (complex IV, CIV), that cooperate to transfer electrons derived from NADH and succinate to molecular oxygen, creating an electrochemical gradient over the inner membrane that drives transmembrane transport and the ATP synthase. Cytochrome c oxidase is the component of the respiratory chain that catalyzes the reduction of oxygen to water. Electrons originating from reduced cytochrome c in the intermembrane space (IMS) are transferred via the dinuclear copper A center (CU(A)) of Cox2 and heme A of Cox1 to the active site in Cox1, a binuclear center (BNC) formed by heme A3 and copper B (CU(B)). The BNC reduces molecular oxygen to 2 water molecules using 4 electrons from cytochrome c in the IMS and 4 protons from the mitochondrial matrix. This chain is Cytochrome c oxidase subunit 9, mitochondrial (cox-17), found in Neurospora crassa (strain ATCC 24698 / 74-OR23-1A / CBS 708.71 / DSM 1257 / FGSC 987).